The sequence spans 469 residues: Chromosomal replication initiator protein DnaA (469 aa).

Residues 1 to 71 form a domain I, interacts with DnaA modulators region; that stretch reads MKEFWQTCVS…EALAAEWYQR (71 aa). The interval 71–131 is domain II; sequence RPVQVTFELP…DAANIVYERS (61 aa). Positions 132-348 are domain III, AAA+ region; it reads RLNTDLTFEN…GALRKVLAYA (217 aa). Residues Gly176, Gly178, Lys179, and Thr180 each contribute to the ATP site. The domain IV, binds dsDNA stretch occupies residues 349-469; the sequence is RFHGRDVLTV…LHVLEQTLKG (121 aa).

The protein belongs to the DnaA family. Oligomerizes as a right-handed, spiral filament on DNA at oriC.

It localises to the cytoplasm. Functionally, plays an essential role in the initiation and regulation of chromosomal replication. ATP-DnaA binds to the origin of replication (oriC) to initiate formation of the DNA replication initiation complex once per cell cycle. Binds the DnaA box (a 9 base pair repeat at the origin) and separates the double-stranded (ds)DNA. Forms a right-handed helical filament on oriC DNA; dsDNA binds to the exterior of the filament while single-stranded (ss)DNA is stabiized in the filament's interior. The ATP-DnaA-oriC complex binds and stabilizes one strand of the AT-rich DNA unwinding element (DUE), permitting loading of DNA polymerase. After initiation quickly degrades to an ADP-DnaA complex that is not apt for DNA replication. Binds acidic phospholipids. The sequence is that of Chromosomal replication initiator protein DnaA from Bordetella parapertussis (strain 12822 / ATCC BAA-587 / NCTC 13253).